The sequence spans 261 residues: MSLKKSPFFELRSGSVDTLLFTVKTTDLDALRAELVKRFEATPEFFADDVVAIDVRRLADGERVALADIRQMLNDVRMRPVGVVALATQGWAGEAGLPLLEARDRRAPAAKPADEAEPAAVPAVETAAAPAAAAAPEQPSEPAPTLVQAGGQTLVIDRPLRSGQQIYAKGDLVVLAPVSHGAEIIAEGNIHIYAPLRGRALAGVHGNHDARIFCTCLEPELISIAGIYRTTENPLPADVLGKSVQIRLEEEKLMIEPLRLT.

A disordered region spans residues 106 to 145 (RAPAAKPADEAEPAAVPAVETAAAPAAAAAPEQPSEPAPT). Residues 118-144 (PAAVPAVETAAAPAAAAAPEQPSEPAP) are compositionally biased toward low complexity.

The protein belongs to the MinC family. In terms of assembly, interacts with MinD and FtsZ.

Functionally, cell division inhibitor that blocks the formation of polar Z ring septums. Rapidly oscillates between the poles of the cell to destabilize FtsZ filaments that have formed before they mature into polar Z rings. Prevents FtsZ polymerization. This Burkholderia orbicola (strain AU 1054) protein is Probable septum site-determining protein MinC.